Reading from the N-terminus, the 365-residue chain is Testis-specific serine/threonine-protein kinase 1 (365 aa).

The 261-residue stretch at 12 to 272 (YIMGINLGEG…IDEILNHCWV (261 aa)) folds into the Protein kinase domain. ATP contacts are provided by residues 18 to 26 (LGEGSYAKV) and Lys41. The Proton acceptor role is filled by Asp136. At Thr174 the chain carries Phosphothreonine. Residues 282-365 (GAINKEGESS…HPQQPSETHT (84 aa)) are disordered. Over residues 303–330 (GADKKSATKLEPREEARSEARSESKPQE) the composition is skewed to basic and acidic residues. Over residues 331-347 (DTLQVVRQSENVGLSSE) the composition is skewed to polar residues.

Belongs to the protein kinase superfamily. CAMK Ser/Thr protein kinase family. Interacts with TSSK2. Interacts with HSP90; this interaction stabilizes TSSK1. Requires Mg(2+) as cofactor. Post-translationally, autophosphorylated. In terms of processing, ubiquitinated; HSP90 activity negatively regulates ubiquitination and degradation. As to expression, testis-specific. Expressed only in postmeiotic spermatids at the final stages of cytodifferentiation in the seminiferous tubules (at protein level). Not detected in released sperms in the lumen of the seminiferous tubules and the epididymis.

The protein localises to the cytoplasm. It localises to the cytoplasmic vesicle. It is found in the secretory vesicle. Its subcellular location is the acrosome. The protein resides in the cell projection. The protein localises to the cilium. It localises to the flagellum. The enzyme catalyses L-seryl-[protein] + ATP = O-phospho-L-seryl-[protein] + ADP + H(+). It catalyses the reaction L-threonyl-[protein] + ATP = O-phospho-L-threonyl-[protein] + ADP + H(+). Activated by phosphorylation on Thr-174, potentially by autophosphorylation. Its function is as follows. Testis-specific serine/threonine-protein kinase required during spermatid development. Phosphorylates 'Ser-281' of TSKS. Involved in the late stages of spermatogenesis, during the reconstruction of the cytoplasm. During spermatogenesis, required for the transformation of a ring-shaped structure around the base of the flagellum originating from the chromatoid body. The protein is Testis-specific serine/threonine-protein kinase 1 (Tssk1b) of Mus musculus (Mouse).